Here is a 670-residue protein sequence, read N- to C-terminus: E3 ubiquitin-protein ligase TRAF7 (670 aa).

2 disordered regions span residues Met-1 to Ala-37 and Gly-49 to Ser-97. Polar residues-rich tracts occupy residues Gly-15 to Glu-31 and Gly-49 to Ala-67. Ser-61, Ser-88, and Ser-91 each carry phosphoserine. An RING-type zinc finger spans residues Cys-131–Asn-165. A TRAF-type zinc finger spans residues His-222–Glu-276. WD repeat units follow at residues Gly-394–Lys-433, Gly-437–Thr-474, Ala-477–Lys-513, Glu-515–Val-554, Thr-557–Thr-594, Gly-597–Thr-638, and Arg-641–Thr-669.

This sequence belongs to the WD repeat TRAF7 family. In terms of assembly, homodimer. Interacts with MAP3K3 and promotes the kinase activity of this enzyme. In terms of processing, phosphorylated by MAP3K3. Post-translationally, ubiquitinates itself upon phosphorylation. In terms of tissue distribution, ubiquitously expressed with high levels in skeletal muscle, heart, colon, spleen, kidney, liver and placenta.

The protein localises to the cytoplasmic vesicle. Its subcellular location is the cytoplasm. It localises to the nucleus. It carries out the reaction S-ubiquitinyl-[E2 ubiquitin-conjugating enzyme]-L-cysteine + [acceptor protein]-L-lysine = [E2 ubiquitin-conjugating enzyme]-L-cysteine + N(6)-ubiquitinyl-[acceptor protein]-L-lysine.. The protein operates within protein modification; protein ubiquitination. Functionally, E3 ubiquitin and SUMO-protein ligase that plays a role in different biological processes such as innate immunity, inflammation or apoptosis. Potentiates MAP3K3-mediated activation of JUN/AP1 and DDIT3 transcriptional regulators. Negatively regulates MYB transcriptional activity by sequestering it to the cytosol via SUMOylation. Plays a role in the phosphorylation of MAPK1 and/or MAPK3, probably via its interaction with MAP3K3. Negatively regulates RLR-mediated innate immunity by promoting 'Lys-48'-linked ubiquitination of TBK1 through its RING domain to inhibit the cellular antiviral response. Promotes 'Lys-29'-linked polyubiquitination of NEMO/IKBKG and RELA leading to targeting these two proteins to lysosomal degradative pathways, reducing the transcriptional activity of NF-kappa-B. The chain is E3 ubiquitin-protein ligase TRAF7 (TRAF7) from Homo sapiens (Human).